Here is a 347-residue protein sequence, read N- to C-terminus: Selenide, water dikinase (347 aa).

Cys-17 is an active-site residue. ATP-binding positions include Lys-20 and 48-50; that span reads TRD. Position 51 (Asp-51) interacts with Mg(2+). ATP contacts are provided by residues Asp-68, Asp-91, and 139–141; that span reads GHS. Asp-91 provides a ligand contact to Mg(2+). Asp-227 contributes to the Mg(2+) binding site.

Belongs to the selenophosphate synthase 1 family. Class I subfamily. As to quaternary structure, homodimer. Mg(2+) is required as a cofactor.

The enzyme catalyses hydrogenselenide + ATP + H2O = selenophosphate + AMP + phosphate + 2 H(+). Synthesizes selenophosphate from selenide and ATP. This chain is Selenide, water dikinase, found in Salmonella typhimurium (strain LT2 / SGSC1412 / ATCC 700720).